The following is a 125-amino-acid chain: Probable mercury resistance operon repressor (125 aa).

Positions 15–109 (VPCTHPDTTA…LARCLAADNA (95 aa)) constitute an HTH arsR-type domain. Residues 49–68 (SAECVEHAGISQPRVSVHLS) constitute a DNA-binding region (H-T-H motif). Residues C69, C73, and C114 each contribute to the Hg(2+) site.

Its function is as follows. Negatively regulates the mercuric reductase merA and the organolyase merB in the absence of mercuric ions. The polypeptide is Probable mercury resistance operon repressor (merR) (Streptomyces lividans).